Consider the following 344-residue polypeptide: Small ribosomal subunit biogenesis GTPase RsgA (344 aa).

Residues 100-268 (KNELSRPDYY…LIDSPGIREF (169 aa)) form the CP-type G domain. Residues 156 to 159 (NKID) and 210 to 218 (GQSGVGKSS) contribute to the GTP site. Residues Cys-292, Cys-297, His-299, and Cys-305 each coordinate Zn(2+).

This sequence belongs to the TRAFAC class YlqF/YawG GTPase family. RsgA subfamily. Monomer. Associates with 30S ribosomal subunit, binds 16S rRNA. It depends on Zn(2+) as a cofactor.

The protein resides in the cytoplasm. In terms of biological role, one of several proteins that assist in the late maturation steps of the functional core of the 30S ribosomal subunit. Helps release RbfA from mature subunits. May play a role in the assembly of ribosomal proteins into the subunit. Circularly permuted GTPase that catalyzes slow GTP hydrolysis, GTPase activity is stimulated by the 30S ribosomal subunit. This Actinobacillus pleuropneumoniae serotype 5b (strain L20) protein is Small ribosomal subunit biogenesis GTPase RsgA.